Reading from the N-terminus, the 657-residue chain is Transmembrane protein 232 (657 aa).

A run of 2 helical transmembrane segments spans residues 168–188 (IGYLVFLRLFIFFLHGHLESF) and 353–373 (WAWNVVYIYTVILAEICLYAA).

The protein resides in the membrane. Plays a critical role for male fertility and sperm motility by regulating sperm cytoplasm removal and maintaining axoneme integrity. The sequence is that of Transmembrane protein 232 (TMEM232) from Homo sapiens (Human).